The following is a 351-amino-acid chain: Phosphate acyltransferase (351 aa).

Belongs to the PlsX family. Homodimer. Probably interacts with PlsY.

It localises to the cytoplasm. The enzyme catalyses a fatty acyl-[ACP] + phosphate = an acyl phosphate + holo-[ACP]. It participates in lipid metabolism; phospholipid metabolism. Functionally, catalyzes the reversible formation of acyl-phosphate (acyl-PO(4)) from acyl-[acyl-carrier-protein] (acyl-ACP). This enzyme utilizes acyl-ACP as fatty acyl donor, but not acyl-CoA. This chain is Phosphate acyltransferase, found in Neisseria meningitidis serogroup B (strain ATCC BAA-335 / MC58).